A 460-amino-acid polypeptide reads, in one-letter code: MATGKIIQVIGAVVDVEFPQDAVPKVYNALEVENGANKLVLEVQQQLGGGVVRCIAMGTSDGLRRGLKVTDLDHPIEVPVGKATLGRIMNVLGEPIDMKGDIGEEERWAIHRPAPSYEDLANSQDLLETGIKVMDLICPFAKGGKVGLFGGAGVGKTVNMMELIRNIAIEHSGYSVFAGVGERTREGNDFYHEMNDSNVLDKVSLVYGQMNEPPGNRLRVALTGLTMAEKFRDEGRDVLLFVDNIYRYTLAGTEVSALLGRMPSAVGYQPTLAEEMGVLQERITSTKTGSITSVQAVYVPADDLTDPSPATTFAHLDATVVLSRNIASLGIYPAVDPLDSTSRQLDPLVVGQEHYDVARGVQSILQRYQELKDIIAILGMDELSEEDKLVVSRARKIQRFLSQPFFVAEVFTGSPGKFVSLKDTIRGFKGIMDGDYDHLPEQAFYMVGTIEEAVEKAKKL.

150–157 (GGAGVGKT) contacts ATP.

Belongs to the ATPase alpha/beta chains family. As to quaternary structure, F-type ATPases have 2 components, CF(1) - the catalytic core - and CF(0) - the membrane proton channel. CF(1) has five subunits: alpha(3), beta(3), gamma(1), delta(1), epsilon(1). CF(0) has three main subunits: a(1), b(2) and c(9-12). The alpha and beta chains form an alternating ring which encloses part of the gamma chain. CF(1) is attached to CF(0) by a central stalk formed by the gamma and epsilon chains, while a peripheral stalk is formed by the delta and b chains.

The protein resides in the cell inner membrane. It carries out the reaction ATP + H2O + 4 H(+)(in) = ADP + phosphate + 5 H(+)(out). Functionally, produces ATP from ADP in the presence of a proton gradient across the membrane. The catalytic sites are hosted primarily by the beta subunits. This chain is ATP synthase subunit beta, found in Serratia proteamaculans (strain 568).